The following is a 79-amino-acid chain: Keratin-associated protein 21-1 (79 aa).

Interacts with hair keratins.

In the hair cortex, hair keratin intermediate filaments are embedded in an interfilamentous matrix, consisting of hair keratin-associated proteins (KRTAP), which are essential for the formation of a rigid and resistant hair shaft through their extensive disulfide bond cross-linking with abundant cysteine residues of hair keratins. The matrix proteins include the high-sulfur and high-glycine-tyrosine keratins. The protein is Keratin-associated protein 21-1 (KRTAP21-1) of Homo sapiens (Human).